The following is a 213-amino-acid chain: Transmembrane protein 186 (213 aa).

The Mitochondrial matrix portion of the chain corresponds to 1 to 79 (MAALLRAVRR…FLSRLKLAQT (79 aa)). Residues 80–100 (ALTVVALPPGYYLYSQGLLTL) traverse the membrane as a helical segment. At 101-102 (NT) the chain is on the mitochondrial intermembrane side. Residues 103–123 (VCLMSGISGFALTMLCWMSYF) form a helical membrane-spanning segment. The Mitochondrial matrix portion of the chain corresponds to 124-213 (LRRLVGILYL…QVFGVHQMLK (90 aa)).

This sequence belongs to the TMEM186 family. As to quaternary structure, part of the mitochondrial complex I assembly/MCIA complex that comprises at least the core subunits TMEM126B, NDUFAF1, ECSIT and ACAD9 and complement subunits such as COA1 and TMEM186. Interacts with MT-ND3.

The protein localises to the mitochondrion inner membrane. Functionally, as part of the MCIA complex, required for efficient assembly of the mitochondrial complex I. In Homo sapiens (Human), this protein is Transmembrane protein 186.